The sequence spans 299 residues: Ribosomal protein L11 methyltransferase (299 aa).

Thr144, Gly165, Asp187, and Asn229 together coordinate S-adenosyl-L-methionine.

It belongs to the methyltransferase superfamily. PrmA family.

The protein resides in the cytoplasm. It carries out the reaction L-lysyl-[protein] + 3 S-adenosyl-L-methionine = N(6),N(6),N(6)-trimethyl-L-lysyl-[protein] + 3 S-adenosyl-L-homocysteine + 3 H(+). In terms of biological role, methylates ribosomal protein L11. In Teredinibacter turnerae (strain ATCC 39867 / T7901), this protein is Ribosomal protein L11 methyltransferase.